A 197-amino-acid chain; its full sequence is Phosphoheptose isomerase (197 aa).

Residues M34–Q196 form the SIS domain. N49–G51 is a binding site for substrate. Positions 58 and 62 each coordinate Zn(2+). Residues E62, N91 to D92, S117 to S119, S122, and Q172 each bind substrate. Residues Q172 and H180 each contribute to the Zn(2+) site.

It belongs to the SIS family. GmhA subfamily. As to quaternary structure, homotetramer. It depends on Zn(2+) as a cofactor.

The protein localises to the cytoplasm. The catalysed reaction is 2 D-sedoheptulose 7-phosphate = D-glycero-alpha-D-manno-heptose 7-phosphate + D-glycero-beta-D-manno-heptose 7-phosphate. It participates in carbohydrate biosynthesis; D-glycero-D-manno-heptose 7-phosphate biosynthesis; D-glycero-alpha-D-manno-heptose 7-phosphate and D-glycero-beta-D-manno-heptose 7-phosphate from sedoheptulose 7-phosphate: step 1/1. In terms of biological role, catalyzes the isomerization of sedoheptulose 7-phosphate in D-glycero-D-manno-heptose 7-phosphate. The sequence is that of Phosphoheptose isomerase from Shewanella pealeana (strain ATCC 700345 / ANG-SQ1).